We begin with the raw amino-acid sequence, 247 residues long: Ribosomal RNA large subunit methyltransferase E (247 aa).

The segment at 1–21 is disordered; sequence MKKTTKKTAGGYGGSGSHKLY. S-adenosyl-L-methionine contacts are provided by G88, W90, D111, D127, and D151. K191 (proton acceptor) is an active-site residue.

The protein belongs to the class I-like SAM-binding methyltransferase superfamily. RNA methyltransferase RlmE family.

It is found in the cytoplasm. The catalysed reaction is uridine(2552) in 23S rRNA + S-adenosyl-L-methionine = 2'-O-methyluridine(2552) in 23S rRNA + S-adenosyl-L-homocysteine + H(+). Functionally, specifically methylates the uridine in position 2552 of 23S rRNA at the 2'-O position of the ribose in the fully assembled 50S ribosomal subunit. The sequence is that of Ribosomal RNA large subunit methyltransferase E from Bartonella henselae (strain ATCC 49882 / DSM 28221 / CCUG 30454 / Houston 1) (Rochalimaea henselae).